The following is a 477-amino-acid chain: Sensor protein kinase PmrB (477 aa).

Transmembrane regions (helical) follow at residues 13–33 (LLVN…ALTY) and 161–181 (LLLF…GGLV). One can recognise an HAMP domain in the interval 186 to 238 (ARGLAPLREVQAEVQQRSARHLQPIAVEAVPLEIRGLIDELNLLLERLRTALE). The Histidine kinase domain occupies 246-459 (DAAHEIRTPL…EVQVFLPKTQ (214 aa)). At His-249 the chain carries Phosphohistidine; by autocatalysis. Positions 455-477 (LPKTQPDATRPPARGPDSGRSHI) are disordered.

It localises to the membrane. It carries out the reaction ATP + protein L-histidine = ADP + protein N-phospho-L-histidine.. Functionally, member of the two-component regulatory system PmrA/PmrB that plays a role in the regulation of resistance towards polymyxin B and cationic antimicrobial peptides in response to limiting concentrations of Mg(2+). Also autoregulates its own pmrAB operon under Mg(2+)-limiting conditions. May function as a membrane-associated protein kinase that phosphorylates PmrA in response to environmental signals leading to activation of specific gene promoters. The polypeptide is Sensor protein kinase PmrB (pmrB) (Pseudomonas aeruginosa (strain ATCC 15692 / DSM 22644 / CIP 104116 / JCM 14847 / LMG 12228 / 1C / PRS 101 / PAO1)).